The primary structure comprises 283 residues: Large ribosomal subunit protein uL2 (283 aa).

Disordered regions lie at residues 37–59 (AKKKKNSGRNNQGKITVRHRGGG) and 219–283 (HKGI…RNSK). Residues 256-269 (WGKRHMGVKTRNNK) are compositionally biased toward basic residues.

The protein belongs to the universal ribosomal protein uL2 family. Part of the 50S ribosomal subunit. Forms a bridge to the 30S subunit in the 70S ribosome.

Functionally, one of the primary rRNA binding proteins. Required for association of the 30S and 50S subunits to form the 70S ribosome, for tRNA binding and peptide bond formation. It has been suggested to have peptidyltransferase activity; this is somewhat controversial. Makes several contacts with the 16S rRNA in the 70S ribosome. The sequence is that of Large ribosomal subunit protein uL2 from Mycoplasmoides gallisepticum (strain R(low / passage 15 / clone 2)) (Mycoplasma gallisepticum).